Here is a 181-residue protein sequence, read N- to C-terminus: TATA-box-binding protein C (181 aa).

Tandem repeats lie at residues 5-83 (IANI…LGML) and 99-177 (VENV…QSKV).

The protein belongs to the TBP family.

Its function is as follows. General factor that plays a role in the activation of archaeal genes transcribed by RNA polymerase. Binds specifically to the TATA box promoter element which lies close to the position of transcription initiation. This is TATA-box-binding protein C (tbpC1) from Halobacterium salinarum (strain ATCC 700922 / JCM 11081 / NRC-1) (Halobacterium halobium).